Reading from the N-terminus, the 167-residue chain is Small ribosomal subunit protein uS5 (167 aa).

The S5 DRBM domain occupies 12 to 75 (LNEKLIAVNR…EKARRNIRDV (64 aa)).

Belongs to the universal ribosomal protein uS5 family. Part of the 30S ribosomal subunit. Contacts proteins S4 and S8.

Its function is as follows. With S4 and S12 plays an important role in translational accuracy. Functionally, located at the back of the 30S subunit body where it stabilizes the conformation of the head with respect to the body. This chain is Small ribosomal subunit protein uS5, found in Psychromonas ingrahamii (strain DSM 17664 / CCUG 51855 / 37).